We begin with the raw amino-acid sequence, 331 residues long: DNA-directed RNA polymerase subunit alpha (331 aa).

The alpha N-terminal domain (alpha-NTD) stretch occupies residues 1-233; sequence MVREKVTVST…DLFIPFLHAE (233 aa). An alpha C-terminal domain (alpha-CTD) region spans residues 265–331; it reads KEIELKYIFI…GILEKHFTID (67 aa).

Belongs to the RNA polymerase alpha chain family. As to quaternary structure, in plastids the minimal PEP RNA polymerase catalytic core is composed of four subunits: alpha, beta, beta', and beta''. When a (nuclear-encoded) sigma factor is associated with the core the holoenzyme is formed, which can initiate transcription.

The protein resides in the plastid. The protein localises to the chloroplast. The enzyme catalyses RNA(n) + a ribonucleoside 5'-triphosphate = RNA(n+1) + diphosphate. DNA-dependent RNA polymerase catalyzes the transcription of DNA into RNA using the four ribonucleoside triphosphates as substrates. The sequence is that of DNA-directed RNA polymerase subunit alpha from Vitis vinifera (Grape).